Reading from the N-terminus, the 72-residue chain is MSIFSSLSSLSTGSLKSSVSSIENGSSSGSFGSNETSGWGQHHWNSCHPCPPPRPICRPCPPCRPEPRCHRY.

Residues 1–38 (MSIFSSLSSLSTGSLKSSVSSIENGSSSGSFGSNETSG) show a composition bias toward low complexity. The interval 1-42 (MSIFSSLSSLSTGSLKSSVSSIENGSSSGSFGSNETSGWGQH) is disordered.

This is an uncharacterized protein from Dictyostelium discoideum (Social amoeba).